Reading from the N-terminus, the 31-residue chain is Cytochrome b6-f complex subunit 6 (31 aa).

Residues 4–24 (LLSYFAFLMLALTFTLALFVG) form a helical membrane-spanning segment.

It belongs to the PetL family. The 4 large subunits of the cytochrome b6-f complex are cytochrome b6, subunit IV (17 kDa polypeptide, PetD), cytochrome f and the Rieske protein, while the 4 small subunits are PetG, PetL, PetM and PetN. The complex functions as a dimer.

The protein localises to the plastid. The protein resides in the chloroplast thylakoid membrane. Component of the cytochrome b6-f complex, which mediates electron transfer between photosystem II (PSII) and photosystem I (PSI), cyclic electron flow around PSI, and state transitions. PetL is important for photoautotrophic growth as well as for electron transfer efficiency and stability of the cytochrome b6-f complex. This is Cytochrome b6-f complex subunit 6 from Adiantum capillus-veneris (Maidenhair fern).